The following is a 399-amino-acid chain: CCA-adding enzyme (399 aa).

Positions 32 and 35 each coordinate ATP. CTP is bound by residues Gly-32 and Arg-35. Positions 45 and 47 each coordinate Mg(2+). The ATP site is built by Arg-116, Asp-159, Arg-162, Arg-165, and Arg-168. Arg-116, Asp-159, Arg-162, Arg-165, and Arg-168 together coordinate CTP.

It belongs to the tRNA nucleotidyltransferase/poly(A) polymerase family. Bacterial CCA-adding enzyme type 3 subfamily. In terms of assembly, homodimer. The cofactor is Mg(2+).

It catalyses the reaction a tRNA precursor + 2 CTP + ATP = a tRNA with a 3' CCA end + 3 diphosphate. The catalysed reaction is a tRNA with a 3' CCA end + 2 CTP + ATP = a tRNA with a 3' CCACCA end + 3 diphosphate. In terms of biological role, catalyzes the addition and repair of the essential 3'-terminal CCA sequence in tRNAs without using a nucleic acid template. Adds these three nucleotides in the order of C, C, and A to the tRNA nucleotide-73, using CTP and ATP as substrates and producing inorganic pyrophosphate. tRNA 3'-terminal CCA addition is required both for tRNA processing and repair. Also involved in tRNA surveillance by mediating tandem CCA addition to generate a CCACCA at the 3' terminus of unstable tRNAs. While stable tRNAs receive only 3'-terminal CCA, unstable tRNAs are marked with CCACCA and rapidly degraded. The sequence is that of CCA-adding enzyme from Streptococcus gordonii (strain Challis / ATCC 35105 / BCRC 15272 / CH1 / DL1 / V288).